Consider the following 564-residue polypeptide: MERIVIALAIINIVKGDQICIGYHANNSTEQVDTIMEKNVTVTHAQDILEKEHNGKLCSLKGVRPLILKDCSVAGWLLGNPMCDEFLNVPEWSYIVEKDNPVNGLCYPGDFNDYEELKHLMSSTNHFEKIQIIPRNSWSTHDASSGVSSACPYNGRSSFFRNVVWLIKKNNAYPTIKRTYNNTNVEDLLILWGIHHPNDAAEQTKLYQNSNTYVSVGTSTLNQRSIPEIATRPKVNGQSGRMEFFWTILRPNDAISFESNGNFIAPEYAYKIVKKGDSAIMKSELEYGNCDTKCQTPVGAINSSMPFHNVHPLTIGECPKYVKSDKLVLATGLRNVPQRETRGLFGAIAGFIEGGWQGMVDGWYGYHHSNEQGSGYAADKESTQKAIDGITNKVNSIIDKMNTQFEAVGKEFNNLERRIENLNKKMEDGFLDVWTYNAELLVLMENERTLDFHDSNVKNLYDKVRLQLRDNAKELGNGCFEFYHKCDNECMESVRNGTYDYPQYSEESRLNREEIDGVKLESMGTYQILSIYSTVASSLALAIMVAGLSFWMCSNGSLQCRICI.

The signal sequence occupies residues 1 to 16 (MERIVIALAIINIVKG). The Extracellular segment spans residues 17-527 (DQICIGYHAN…VKLESMGTYQ (511 aa)). Intrachain disulfides connect cysteine 20/cysteine 479, cysteine 58/cysteine 290, cysteine 71/cysteine 83, cysteine 106/cysteine 151, cysteine 294/cysteine 318, and cysteine 486/cysteine 490. Asparagine 26, asparagine 27, and asparagine 39 each carry an N-linked (GlcNAc...) asparagine; by host glycan. 2 N-linked (GlcNAc...) asparagine; by host glycosylation sites follow: asparagine 181 and asparagine 302. Asparagine 496 carries an N-linked (GlcNAc...) asparagine; by host glycan. Residues 528 to 548 (ILSIYSTVASSLALAIMVAGL) form a helical membrane-spanning segment. Topologically, residues 549–564 (SFWMCSNGSLQCRICI) are cytoplasmic. Residues cysteine 553, cysteine 560, and cysteine 563 are each lipidated (S-palmitoyl cysteine; by host).

It belongs to the influenza viruses hemagglutinin family. As to quaternary structure, homotrimer of disulfide-linked HA1-HA2. Palmitoylated. Post-translationally, in natural infection, inactive HA is matured into HA1 and HA2 outside the cell by one or more trypsin-like, arginine-specific endoprotease secreted by the bronchial epithelial cells. One identified protease that may be involved in this process is secreted in lungs by club cells.

The protein localises to the virion membrane. Its subcellular location is the host apical cell membrane. In terms of biological role, binds to sialic acid-containing receptors on the cell surface, bringing about the attachment of the virus particle to the cell. This attachment induces virion internalization of about two third of the virus particles through clathrin-dependent endocytosis and about one third through a clathrin- and caveolin-independent pathway. Plays a major role in the determination of host range restriction and virulence. Class I viral fusion protein. Responsible for penetration of the virus into the cell cytoplasm by mediating the fusion of the membrane of the endocytosed virus particle with the endosomal membrane. Low pH in endosomes induces an irreversible conformational change in HA2, releasing the fusion hydrophobic peptide. Several trimers are required to form a competent fusion pore. Binds to sialic acid-containing receptors on the cell surface, bringing about the attachment of the virus particle to the cell. This attachment induces virion internalization either through clathrin-dependent endocytosis or through clathrin- and caveolin-independent pathway. Plays a major role in the determination of host range restriction and virulence. Class I viral fusion protein. Responsible for penetration of the virus into the cell cytoplasm by mediating the fusion of the membrane of the endocytosed virus particle with the endosomal membrane. Low pH in endosomes induces an irreversible conformational change in HA2, releasing the fusion hydrophobic peptide. Several trimers are required to form a competent fusion pore. In Aves, this protein is Hemagglutinin.